A 195-amino-acid chain; its full sequence is Oocyte-secreted protein 3 (195 aa).

Residues 1–21 (MKAFVASGLLLLIFGMWRCSG) form the signal peptide. Asparagine 102 is a glycosylation site (N-linked (GlcNAc...) asparagine).

Belongs to the PLAC1 family. As to expression, oocyte-specific.

It is found in the secreted. The protein is Oocyte-secreted protein 3 of Mus musculus (Mouse).